The chain runs to 131 residues: Large ribosomal subunit protein bL17 (131 aa).

This sequence belongs to the bacterial ribosomal protein bL17 family. As to quaternary structure, part of the 50S ribosomal subunit. Contacts protein L32.

In Janthinobacterium sp. (strain Marseille) (Minibacterium massiliensis), this protein is Large ribosomal subunit protein bL17.